The sequence spans 343 residues: Flavonoid 4'-O-methyltransferase 4 (343 aa).

Aspartate 211 lines the S-adenosyl-L-methionine pocket. The active-site Proton acceptor is histidine 249.

This sequence belongs to the class I-like SAM-binding methyltransferase superfamily. Cation-independent O-methyltransferase family. Homodimer.

It catalyses the reaction apigenin + S-adenosyl-L-methionine = acacetin + S-adenosyl-L-homocysteine + H(+). The enzyme catalyses kaempferol + S-adenosyl-L-methionine = kaempferide + S-adenosyl-L-homocysteine + H(+). It carries out the reaction isorhamnetin + S-adenosyl-L-methionine = 3',4'-O-dimethylquercetin + S-adenosyl-L-homocysteine + 2 H(+). The catalysed reaction is scutellarein + S-adenosyl-L-methionine = scutellarein 4'-methyl ether + S-adenosyl-L-homocysteine + H(+). It catalyses the reaction (2S)-naringenin + S-adenosyl-L-methionine = (2S)-naringenin 4'-methyl ether + S-adenosyl-L-homocysteine + H(+). The enzyme catalyses 4',7,8-trihydroxyflavone + S-adenosyl-L-methionine = 7,8-dihydroxy-4'-methoxyflavone + S-adenosyl-L-homocysteine + H(+). It carries out the reaction taxifolin + S-adenosyl-L-methionine = taxifolin 4'-methyl ether + S-adenosyl-L-homocysteine + H(+). It participates in flavonoid metabolism. Flavonoid 4'-O-methyltransferase involved in the biosynthesis of polymethoxylated flavonoids natural products such as pebrellin, aroma compounds which contribute to the flavor of peppermint, and exhibit pharmacological activities such as anti-allergic, anti-oxidant, antibacterial, anti-proliferative, and anti-inflammatory effects. Catalyzes S-adenosylmethionine-dependent regioselective 4'-O-methylation of flavonoids; active on various hydroxylated flavonoid substrates, including isorhamnetin, kaempferol, apigenin (API), scutellarein (6-hydroxy-apigenin, 6-OH-API, SCU), taxifolin, 7,8,4'-trihydroxy-flavone and naringenin (NAR), and, with a lower efficiency, quercetin, rhamnetin, luteolin (LUT) and 7,8,3',4'-tetrahydroxy-flavone. This Mentha piperita (Peppermint) protein is Flavonoid 4'-O-methyltransferase 4.